Reading from the N-terminus, the 229-residue chain is MEWTETQFDRQRREMVDSLRRNGIQNPWVLEAFQEVRRHLFVPEEGRAHAYDDAAWPIGYGQTISQPFTVAYMTSLLADHVPGGSGRPFGRVLEIGTGSGYQAAILEAIGYSVFSVERLPVLYHQAKAKFHRFGLPITCRLGDGTLGWPEEAPFDGILVSAGAPSEPKALKEQLAENGSMVIPVGNRGMQVMTLVTRKGARFEREQYQNFAFVPLVGREGWDDKNTLLY.

Serine 65 is an active-site residue.

The protein belongs to the methyltransferase superfamily. L-isoaspartyl/D-aspartyl protein methyltransferase family.

It localises to the cytoplasm. The catalysed reaction is [protein]-L-isoaspartate + S-adenosyl-L-methionine = [protein]-L-isoaspartate alpha-methyl ester + S-adenosyl-L-homocysteine. Its function is as follows. Catalyzes the methyl esterification of L-isoaspartyl residues in peptides and proteins that result from spontaneous decomposition of normal L-aspartyl and L-asparaginyl residues. It plays a role in the repair and/or degradation of damaged proteins. In Chlorobium phaeovibrioides (strain DSM 265 / 1930) (Prosthecochloris vibrioformis (strain DSM 265)), this protein is Protein-L-isoaspartate O-methyltransferase.